Here is a 273-residue protein sequence, read N- to C-terminus: Vitamin B12-binding protein (273 aa).

Positions 1–18 (MMKTLSSLLLLFSVSLQA) are cleaved as a signal peptide. The Fe/B12 periplasmic-binding domain maps to 23–273 (RVISLAPHAT…EHFASIEQKR (251 aa)). Cysteine 183 and cysteine 263 are oxidised to a cystine.

The protein belongs to the BtuF family. The complex is composed of two ATP-binding proteins (BtuD), two transmembrane proteins (BtuC) and a solute-binding protein (BtuF).

Its subcellular location is the periplasm. Its function is as follows. Part of the ABC transporter complex BtuCDF involved in vitamin B12 import. Binds vitamin B12 and delivers it to the periplasmic surface of BtuC. The protein is Vitamin B12-binding protein of Vibrio vulnificus (strain CMCP6).